The primary structure comprises 279 residues: uncharacterized protein (279 aa).

The interval 1-28 (MGLFGGGNSKSTSNQTTNNENTNIATQG) is disordered. Low complexity predominate over residues 9–23 (SKSTSNQTTNNENTN). A helical membrane pass occupies residues 256 to 273 (KTLMIGIVAVSAAVGLYA).

It localises to the host membrane. This is an uncharacterized protein from Pseudoalteromonas espejiana (Bacteriophage PM2).